A 408-amino-acid polypeptide reads, in one-letter code: LL-diaminopimelate aminotransferase (408 aa).

Tyr15 and Gly42 together coordinate substrate. Pyridoxal 5'-phosphate-binding positions include Tyr72, 108–109 (SK), Tyr132, Asn187, Tyr218, and 246–248 (SFS). Residues Lys109, Tyr132, and Asn187 each coordinate substrate. Lys249 carries the N6-(pyridoxal phosphate)lysine modification. Pyridoxal 5'-phosphate contacts are provided by Arg257 and Asn292. Positions 292 and 388 each coordinate substrate.

The protein belongs to the class-I pyridoxal-phosphate-dependent aminotransferase family. LL-diaminopimelate aminotransferase subfamily. As to quaternary structure, homodimer. Pyridoxal 5'-phosphate is required as a cofactor.

The enzyme catalyses (2S,6S)-2,6-diaminopimelate + 2-oxoglutarate = (S)-2,3,4,5-tetrahydrodipicolinate + L-glutamate + H2O + H(+). The protein operates within amino-acid biosynthesis; L-lysine biosynthesis via DAP pathway; LL-2,6-diaminopimelate from (S)-tetrahydrodipicolinate (aminotransferase route): step 1/1. Its function is as follows. Involved in the synthesis of meso-diaminopimelate (m-DAP or DL-DAP), required for both lysine and peptidoglycan biosynthesis. Catalyzes the direct conversion of tetrahydrodipicolinate to LL-diaminopimelate. The polypeptide is LL-diaminopimelate aminotransferase (Prochlorococcus marinus (strain AS9601)).